The following is a 339-amino-acid chain: MRVYYDRDADLNLIKGKKVVIVGYGSQGHAHALNLRDSGVKDIVIALREGSATAKKAEHEGFKVMNVADAAKWGDVVMMLTPDELQGDIYKESLEGNMKQGAALLFAHGLNVHFNLIEPRKDLDVLMVAPKGPGHTVRGEYLKGGGVPTLIAIAQDASGNAHDLGLSYASANGGGRAGIIETTFKEECETDLFGEQAVLCGGLVELIKAGFETLVEAGYAPEMAYFECLHEVKLIVDLIYEGGIANMNYSISNTAEYGEYVTGPRIVTPETKAEMKRVLNDIQSGIFTRNWMLENKVGQTSFKATRAKLAAHPIEEVGAKLRGMMPWISEKALVDKTKN.

In terms of domain architecture, KARI N-terminal Rossmann spans M1–T182. Residues Y24–Q27, R48, S51, T53, and D83–Q86 each bind NADP(+). H108 is an active-site residue. Residue G134 participates in NADP(+) binding. Residues T183 to I328 form the KARI C-terminal knotted domain. Positions 191, 195, 227, and 231 each coordinate Mg(2+). S252 is a binding site for substrate.

This sequence belongs to the ketol-acid reductoisomerase family. Mg(2+) serves as cofactor.

The enzyme catalyses (2R)-2,3-dihydroxy-3-methylbutanoate + NADP(+) = (2S)-2-acetolactate + NADPH + H(+). The catalysed reaction is (2R,3R)-2,3-dihydroxy-3-methylpentanoate + NADP(+) = (S)-2-ethyl-2-hydroxy-3-oxobutanoate + NADPH + H(+). It functions in the pathway amino-acid biosynthesis; L-isoleucine biosynthesis; L-isoleucine from 2-oxobutanoate: step 2/4. The protein operates within amino-acid biosynthesis; L-valine biosynthesis; L-valine from pyruvate: step 2/4. Involved in the biosynthesis of branched-chain amino acids (BCAA). Catalyzes an alkyl-migration followed by a ketol-acid reduction of (S)-2-acetolactate (S2AL) to yield (R)-2,3-dihydroxy-isovalerate. In the isomerase reaction, S2AL is rearranged via a Mg-dependent methyl migration to produce 3-hydroxy-3-methyl-2-ketobutyrate (HMKB). In the reductase reaction, this 2-ketoacid undergoes a metal-dependent reduction by NADPH to yield (R)-2,3-dihydroxy-isovalerate. The protein is Ketol-acid reductoisomerase (NADP(+)) of Methylorubrum populi (strain ATCC BAA-705 / NCIMB 13946 / BJ001) (Methylobacterium populi).